The chain runs to 1503 residues: Chromosome partition protein MukB (1503 aa).

Residues 1–19 (MMNTNELFDQTAVNSSQDK) are compositionally biased toward polar residues. Residues 1–21 (MMNTNELFDQTAVNSSQDKPL) are disordered. Residue 65–72 (GGNGAGKS) participates in ATP binding. 5 coiled-coil regions span residues 370–495 (MNAL…QRLS), 536–616 (DQKM…HRQQ), 662–697 (MQEMLRKEREATLERDELARTEAALASQISQLSQAD), 865–1173 (EMLM…SAEE), and 1238–1293 (DAIE…LQNI). The segment at 696 to 813 (ADGAEDIRLN…EVPLFGRAAR (118 aa)) is flexible hinge.

This sequence belongs to the SMC family. MukB subfamily. In terms of assembly, homodimerization via its hinge domain. Binds to DNA via its C-terminal region. Interacts, and probably forms a ternary complex, with MukE and MukF via its C-terminal region. The complex formation is stimulated by calcium or magnesium. Interacts with tubulin-related protein FtsZ.

Its subcellular location is the cytoplasm. The protein resides in the nucleoid. Functionally, plays a central role in chromosome condensation, segregation and cell cycle progression. Functions as a homodimer, which is essential for chromosome partition. Involved in negative DNA supercoiling in vivo, and by this means organize and compact chromosomes. May achieve or facilitate chromosome segregation by condensation DNA from both sides of a centrally located replisome during cell division. This Haemophilus ducreyi (strain 35000HP / ATCC 700724) protein is Chromosome partition protein MukB.